Here is a 155-residue protein sequence, read N- to C-terminus: Ribosome maturation factor RimP (155 aa).

The protein belongs to the RimP family.

The protein resides in the cytoplasm. Functionally, required for maturation of 30S ribosomal subunits. The polypeptide is Ribosome maturation factor RimP (Synechococcus sp. (strain RCC307)).